The primary structure comprises 336 residues: Atypical chemokine receptor 1 (336 aa).

Residues 1–63 (MGNCLHPAEL…CNLLDDSALP (63 aa)) are Extracellular-facing. N-linked (GlcNAc...) asparagine glycans are attached at residues asparagine 16, asparagine 27, and asparagine 33. 2 cysteine pairs are disulfide-bonded: cysteine 51/cysteine 276 and cysteine 129/cysteine 195. The helical transmembrane segment at 64-84 (FFILVSVLGILASGIVLFMFF) threads the bilayer. The Cytoplasmic segment spans residues 85–95 (RPLFHWQLCPG). A helical transmembrane segment spans residues 96–116 (WPVLAQLAVGSALFSIVVPIL). Residues 117 to 129 (APGLGNTRSSALC) lie on the Extracellular side of the membrane. The helical transmembrane segment at 130–153 (SLGYCVWYGSAFAQALLLGCHASL) threads the bilayer. The Cytoplasmic segment spans residues 154 to 166 (GPKLGADQVPGLT). The chain crosses the membrane as a helical span at residues 167-187 (LGLSVGLWGVAALLTLPVTLA). The Extracellular segment spans residues 188-207 (SGASGGLCTPVYSMELKALQ). The chain crosses the membrane as a helical span at residues 208 to 228 (ATHAVACLAIFVLLPLGLFGA). Topologically, residues 229–244 (KGLKKALGMGPGPWMN) are cytoplasmic. The helical transmembrane segment at 245–265 (ILWAWFIFWWPHGVVLGLDFL) threads the bilayer. Over 266–287 (VRSKLLLLSTCLAQQALDLLLN) the chain is Extracellular. The chain crosses the membrane as a helical span at residues 288–308 (LAEALAILHCVATPLLLALFC). The Cytoplasmic portion of the chain corresponds to 309–336 (HQATRTLLPSLPLPEGWSSHLDTLGSKS).

It belongs to the G-protein coupled receptor 1 family. Atypical chemokine receptor subfamily.

Its subcellular location is the early endosome. The protein resides in the recycling endosome. It is found in the membrane. In terms of biological role, atypical chemokine receptor that controls chemokine levels and localization via high-affinity chemokine binding that is uncoupled from classic ligand-driven signal transduction cascades, resulting instead in chemokine sequestration, degradation, or transcytosis. Also known as interceptor (internalizing receptor) or chemokine-scavenging receptor or chemokine decoy receptor. Has a promiscuous chemokine-binding profile, interacting with inflammatory chemokines of both the CXC and the CC subfamilies but not with homeostatic chemokines. Acts as a receptor for chemokines including CCL2, CCL5, CCL7, CCL11, CCL13, CCL14, CCL17, CXCL5, CXCL6, IL8/CXCL8, CXCL11, GRO, RANTES, MCP-1 and TARC. May regulate chemokine bioavailability and, consequently, leukocyte recruitment through two distinct mechanisms: when expressed in endothelial cells, it sustains the abluminal to luminal transcytosis of tissue-derived chemokines and their subsequent presentation to circulating leukocytes; when expressed in erythrocytes, serves as blood reservoir of cognate chemokines but also as a chemokine sink, buffering potential surges in plasma chemokine levels. This is Atypical chemokine receptor 1 (ACKR1) from Papio hamadryas (Hamadryas baboon).